Consider the following 956-residue polypeptide: Glutamate receptor ionotropic, kainate 4 (956 aa).

The N-terminal stretch at 1–20 (MPRVSAPLVLLPAWLVMVAC) is a signal peptide. The Extracellular portion of the chain corresponds to 21–545 (SPHSLRIAAI…YFSFLDPFSP (525 aa)). Residues Asn-158, Asn-220, Asn-272, Asn-286, Asn-323, Asn-408, Asn-415, and Asn-479 are each glycosylated (N-linked (GlcNAc...) asparagine). Gly-500, Thr-502, and Arg-507 together coordinate L-glutamate. The chain crosses the membrane as a helical span at residues 546–566 (GVWLFMLLAYLAVSCVLFLVA). At 567-623 (RLTPYEWYSPHPCAQGRCNLLVNQYSLGNSLWFPVGGFMQQGSTIAPRALSTRCVSG) the chain is on the cytoplasmic side. A helical membrane pass occupies residues 624–644 (VWWAFTLIIISSYTANLAAFL). The Extracellular segment spans residues 645 to 804 (TVQRMDVPIE…HRAKGLGMEN (160 aa)). L-glutamate is bound by residues Ser-674, Ser-675, and Glu-723. Asn-736 carries N-linked (GlcNAc...) asparagine glycosylation. The chain crosses the membrane as a helical span at residues 805 to 825 (IGGIFVVLICGLIVAIFMAML). The Cytoplasmic portion of the chain corresponds to 826-956 (EFLWTLRHSE…EKTTNSSEPE (131 aa)). 2 disordered regions span residues 863-889 (RRRA…TLSN) and 931-956 (LRAR…SEPE). Over residues 939-948 (RSEESLEWEK) the composition is skewed to basic and acidic residues.

The protein belongs to the glutamate-gated ion channel (TC 1.A.10.1) family. GRIK4 subfamily. Homodimer. Can form functional heteromeric receptors with GRIK1, GRIK2 and GRIK3.

The protein localises to the cell membrane. The protein resides in the postsynaptic cell membrane. It is found in the presynaptic cell membrane. Ionotropic glutamate receptor that functions as a cation-permeable ligand-gated ion channel. Cannot form functional channels on its own. Shows channel activity only in heteromeric assembly with GRIK1, GRIK2 and GRIK3 subunits. The chain is Glutamate receptor ionotropic, kainate 4 (GRIK4) from Homo sapiens (Human).